The sequence spans 917 residues: MDYKETLLMPKTDFPMRGGLPNKEPQIQEKWDAEDQYHKALEKNKGNETFILHDGPPYANGNLHMGHALNKILKDFIVRYKTMQGFYAPYVPGWDTHGLPIEQALTKKGVDRKKMSTAEFREKCKEFALEQIELQKKDFRRLGVRGDFNDPYITLKPEYEAAQIRIFGEMADKGLIYKGKKPVYWSPSSESSLAEAEIEYHDKRSASIYVAFDVKDDKGVVDADAKFIIWTTTPWTIPSNVAITVHPELKYGQYNVNGEKYIIAEALSDAVAEALDWDKASIKLEKEYTGKELEYVVAQHPFLDRESLVINGDHVTTDAGTGCVHTAPGHGEDDYIVGQKYELPVISPIDDKGVFTEEGGQFEGMFYDKANKAVTDLLTEKGALLKLDFITHSYPHDWRTKKPVIFRATPQWFASISKVRQDILDAIENTNFKVNWGKTRIYNMVRDRGEWVISRQRVWGVPLPVFYAENGEIIMTKETVNHVADLFAEHGSNIWFEREAKDLLPEGFTHPGSPNGTFTKETDIMDVWFDSGSSHRGVLETRPELSFPADMYLEGSDQYRGWFNSSITTSVATRGVSPYKFLLSHGFVMDGEGKKMSKSLGNVIVPDQVVKQKGADIARLWVSSTDYLADVRISDEILKQTSDVYRKIRNTLRFMLGNINDFNPDTDSIPESELLEVDRYLLNRLREFTASTINNYENFDYLNIYQEVQNFINVELSNFYLDYGKDILYIEQRDSHIRRSMQTVLYQILVDMTKLLAPILVHTAEEVWSHTPHVKEESVHLADMPKVVEVDQALLDKWRTFMNLRDDVNRALETARNEKVIGKSLEAKVTIASNDKFNASEFLTSFDALHQLFIVSQVKVVDKLDDQATAYEHGDIVIEHADGEKCERCWNYSEDLGAVDELTHLCPRCQQVVKSLV.

Residues 57–67 (PYANGNLHMGH) carry the 'HIGH' region motif. Position 554 (Glu-554) interacts with L-isoleucyl-5'-AMP. The 'KMSKS' region signature appears at 595 to 599 (KMSKS). Residue Lys-598 participates in ATP binding. Positions 886, 889, 906, and 909 each coordinate Zn(2+).

This sequence belongs to the class-I aminoacyl-tRNA synthetase family. IleS type 1 subfamily. Monomer. The cofactor is Zn(2+).

The protein localises to the cytoplasm. It catalyses the reaction tRNA(Ile) + L-isoleucine + ATP = L-isoleucyl-tRNA(Ile) + AMP + diphosphate. Its function is as follows. Catalyzes the attachment of isoleucine to tRNA(Ile). As IleRS can inadvertently accommodate and process structurally similar amino acids such as valine, to avoid such errors it has two additional distinct tRNA(Ile)-dependent editing activities. One activity is designated as 'pretransfer' editing and involves the hydrolysis of activated Val-AMP. The other activity is designated 'posttransfer' editing and involves deacylation of mischarged Val-tRNA(Ile). This chain is Isoleucine--tRNA ligase, found in Staphylococcus aureus (strain Mu3 / ATCC 700698).